Consider the following 522-residue polypeptide: Chromosomal replication initiator protein DnaA (522 aa).

The domain I, interacts with DnaA modulators stretch occupies residues 1–71 (MQDFWHAASA…QSLACDYWEM (71 aa)). Positions 71-185 (MQVDVQFVLD…PVDDTVHERS (115 aa)) are domain II. A domain III, AAA+ region region spans residues 186-402 (RLNPILTFDN…GALRKILAYS (217 aa)). ATP-binding residues include Gly-230, Gly-232, Lys-233, and Thr-234. The interval 403-522 (NFHGKEITIE…LHVLEQTLKG (120 aa)) is domain IV, binds dsDNA.

It belongs to the DnaA family. In terms of assembly, oligomerizes as a right-handed, spiral filament on DNA at oriC.

The protein resides in the cytoplasm. Its function is as follows. Plays an essential role in the initiation and regulation of chromosomal replication. ATP-DnaA binds to the origin of replication (oriC) to initiate formation of the DNA replication initiation complex once per cell cycle. Binds the DnaA box (a 9 base pair repeat at the origin) and separates the double-stranded (ds)DNA. Forms a right-handed helical filament on oriC DNA; dsDNA binds to the exterior of the filament while single-stranded (ss)DNA is stabiized in the filament's interior. The ATP-DnaA-oriC complex binds and stabilizes one strand of the AT-rich DNA unwinding element (DUE), permitting loading of DNA polymerase. After initiation quickly degrades to an ADP-DnaA complex that is not apt for DNA replication. Binds acidic phospholipids. In Ralstonia nicotianae (strain ATCC BAA-1114 / GMI1000) (Ralstonia solanacearum), this protein is Chromosomal replication initiator protein DnaA.